The sequence spans 380 residues: Nucleoporin Nup43 (380 aa).

M1 carries the N-acetylmethionine modification. WD repeat units lie at residues 8 to 57 (FVSQ…NLDS), 72 to 110 (RHHGDVMDLQFFDQERIVAASSTGCVTVFLHHPNNQTLS), 119 to 166 (HYHT…AVRT), 170 to 208 (ADSSTLHAVTFLRTPEIVTVNSIGQLKIWDFRQQGSEPC), 215 to 255 (GDRV…MPVS), and 259 to 299 (AHEA…PEKS).

Component of the Nup107-160 subcomplex of the nuclear pore complex (NPC). The Nup107-160 subcomplex includes NUP160, NUP133, NUP107, NUP98, NUP85, NUP43, NUP37, SEH1 and SEC13.

It localises to the chromosome. It is found in the centromere. The protein localises to the kinetochore. Its subcellular location is the nucleus. The protein resides in the nuclear pore complex. Component of the Nup107-160 subcomplex of the nuclear pore complex (NPC). The Nup107-160 subcomplex is required for the assembly of a functional NPC. The Nup107-160 subcomplex is also required for normal kinetochore microtubule attachment, mitotic progression and chromosome segregation. The sequence is that of Nucleoporin Nup43 (Nup43) from Mus musculus (Mouse).